We begin with the raw amino-acid sequence, 229 residues long: UPF0488 protein C8orf33 homolog (229 aa).

Ala2 is subject to N-acetylalanine. An Omega-N-methylarginine modification is found at Arg27. Positions 55–101 (SRAHPLGDEGGTASKKQNKKKKTRNRASVANGGEKASEKLAPEEVPL) are disordered. The span at 70-79 (KQNKKKKTRN) shows a compositional bias: basic residues. At Ser82 the chain carries Phosphoserine.

It belongs to the UPF0488 family.

The protein is UPF0488 protein C8orf33 homolog of Pongo abelii (Sumatran orangutan).